We begin with the raw amino-acid sequence, 257 residues long: UPF0246 protein SO_3540 (257 aa).

The protein belongs to the UPF0246 family.

The sequence is that of UPF0246 protein SO_3540 from Shewanella oneidensis (strain ATCC 700550 / JCM 31522 / CIP 106686 / LMG 19005 / NCIMB 14063 / MR-1).